Here is a 321-residue protein sequence, read N- to C-terminus: Ornithine carbamoyltransferase (321 aa).

Residues Ser53–Thr56, Gln80, Arg104, and His131–Gln134 contribute to the carbamoyl phosphate site. L-ornithine contacts are provided by residues Asn166, Asp230, and Ser234–Met235. Carbamoyl phosphate-binding positions include Cys270–Leu271 and Arg298.

The protein belongs to the aspartate/ornithine carbamoyltransferase superfamily. OTCase family.

It localises to the cytoplasm. The catalysed reaction is carbamoyl phosphate + L-ornithine = L-citrulline + phosphate + H(+). It participates in amino-acid biosynthesis; L-arginine biosynthesis; L-arginine from L-ornithine and carbamoyl phosphate: step 1/3. In terms of biological role, reversibly catalyzes the transfer of the carbamoyl group from carbamoyl phosphate (CP) to the N(epsilon) atom of ornithine (ORN) to produce L-citrulline. This is Ornithine carbamoyltransferase from Bifidobacterium longum (strain NCC 2705).